The primary structure comprises 896 residues: Protein translocase subunit SecA (896 aa).

ATP contacts are provided by residues Gln87, 105-109 (GEGKT), and Asp507. The segment at 855-879 (LSENDEASETQTFRRQEKKIGRNDP) is disordered. Residues 866 to 876 (TFRRQEKKIGR) are compositionally biased toward basic and acidic residues. Residues Cys880, Cys882, Cys891, and His892 each coordinate Zn(2+).

This sequence belongs to the SecA family. As to quaternary structure, monomer and homodimer. Part of the essential Sec protein translocation apparatus which comprises SecA, SecYEG and auxiliary proteins SecDF-YajC and YidC. Requires Zn(2+) as cofactor.

The protein localises to the cell inner membrane. It localises to the cytoplasm. The catalysed reaction is ATP + H2O + cellular proteinSide 1 = ADP + phosphate + cellular proteinSide 2.. In terms of biological role, part of the Sec protein translocase complex. Interacts with the SecYEG preprotein conducting channel. Has a central role in coupling the hydrolysis of ATP to the transfer of proteins into and across the cell membrane, serving both as a receptor for the preprotein-SecB complex and as an ATP-driven molecular motor driving the stepwise translocation of polypeptide chains across the membrane. This is Protein translocase subunit SecA from Legionella pneumophila (strain Lens).